We begin with the raw amino-acid sequence, 160 residues long: Large ribosomal subunit protein uL22c (160 aa).

Belongs to the universal ribosomal protein uL22 family. Part of the 50S ribosomal subunit.

Its subcellular location is the plastid. The protein localises to the chloroplast. This protein binds specifically to 23S rRNA. Its function is as follows. The globular domain of the protein is located near the polypeptide exit tunnel on the outside of the subunit, while an extended beta-hairpin is found that lines the wall of the exit tunnel in the center of the 70S ribosome. This is Large ribosomal subunit protein uL22c (rpl22) from Eucalyptus globulus subsp. globulus (Tasmanian blue gum).